We begin with the raw amino-acid sequence, 145 residues long: D-aminoacyl-tRNA deacylase (145 aa).

The Gly-cisPro motif, important for rejection of L-amino acids motif lies at 137 to 138 (GP).

Belongs to the DTD family. In terms of assembly, homodimer.

It localises to the cytoplasm. It catalyses the reaction glycyl-tRNA(Ala) + H2O = tRNA(Ala) + glycine + H(+). The enzyme catalyses a D-aminoacyl-tRNA + H2O = a tRNA + a D-alpha-amino acid + H(+). Functionally, an aminoacyl-tRNA editing enzyme that deacylates mischarged D-aminoacyl-tRNAs. Also deacylates mischarged glycyl-tRNA(Ala), protecting cells against glycine mischarging by AlaRS. Acts via tRNA-based rather than protein-based catalysis; rejects L-amino acids rather than detecting D-amino acids in the active site. By recycling D-aminoacyl-tRNA to D-amino acids and free tRNA molecules, this enzyme counteracts the toxicity associated with the formation of D-aminoacyl-tRNA entities in vivo and helps enforce protein L-homochirality. This Shewanella sp. (strain ANA-3) protein is D-aminoacyl-tRNA deacylase.